The sequence spans 238 residues: Glycerol uptake facilitator protein 4 (238 aa).

Transmembrane regions (helical) follow at residues 2–22 (IHQL…GVGV) and 39–59 (IFAI…FGNV). An NPA 1 motif is present at residues 62–64 (NPA). 3 consecutive transmembrane segments (helical) span residues 80–100 (FIPY…IVWI), 135–155 (FFVE…ISEV), and 158–178 (PGIV…GLGG). The NPA 2 motif lies at 185 to 187 (NLA). Residues 211 to 231 (YGIIVPGIAPFVGAACAALFM) traverse the membrane as a helical segment.

The protein belongs to the MIP/aquaporin (TC 1.A.8) family.

It is found in the cell membrane. Transporter that facilitates the transmembrane diffusion of water, dihydroxyacetone, glycerol, urea, H(2)O(2) and D/L-lactic acid. Is involved in the cellular racemization of lactate and lactate metabolism, but has likely a more general physiological role. The transported molecule is indeed lactic acid and not the lactate anion, in agreement with the assumption that, with very few exceptions, MIPs (major intrinsic proteins) only facilitate the transport of uncharged solutes. The polypeptide is Glycerol uptake facilitator protein 4 (Lactiplantibacillus plantarum (strain ATCC BAA-793 / NCIMB 8826 / WCFS1) (Lactobacillus plantarum)).